A 1141-amino-acid chain; its full sequence is Eukaryotic translation initiation factor 3 subunit A (1141 aa).

The 183-residue stretch at 319 to 501 folds into the PCI domain; the sequence is LQRMAAHVLL…NSIYFGTDLT (183 aa). Basic and acidic residues-rich tracts occupy residues 588–623 and 829–899; these read QNNA…EERE and AAEE…RGGD. 2 disordered regions span residues 588–631 and 829–1141; these read QNNA…QNEI and AAEE…VKRR. Position 908 is a phosphoserine (Ser-908). Basic and acidic residues-rich tracts occupy residues 920-976, 990-1051, 1059-1087, and 1110-1131; these read ERND…EPDT, SRDD…EPQR, DAPR…RGDQ, and TREE…KAGD.

It belongs to the eIF-3 subunit A family. In terms of assembly, component of the eukaryotic translation initiation factor 3 (eIF-3) complex. The eIF-3 complex interacts with pix.

It localises to the cytoplasm. In terms of biological role, RNA-binding component of the eukaryotic translation initiation factor 3 (eIF-3) complex, which is involved in protein synthesis of a specialized repertoire of mRNAs and, together with other initiation factors, stimulates binding of mRNA and methionyl-tRNAi to the 40S ribosome. The eIF-3 complex specifically targets and initiates translation of a subset of mRNAs involved in cell proliferation. This chain is Eukaryotic translation initiation factor 3 subunit A, found in Drosophila simulans (Fruit fly).